The chain runs to 275 residues: NH(3)-dependent NAD(+) synthetase (275 aa).

Position 50–57 (50–57 (GISGGVDS)) interacts with ATP. D56 contacts Mg(2+). R147 is a binding site for deamido-NAD(+). Residue T167 coordinates ATP. Residue E172 participates in Mg(2+) binding. K180 and D187 together coordinate deamido-NAD(+). ATP is bound by residues K196 and T218. 267–268 (HK) lines the deamido-NAD(+) pocket.

Belongs to the NAD synthetase family. In terms of assembly, homodimer.

It catalyses the reaction deamido-NAD(+) + NH4(+) + ATP = AMP + diphosphate + NAD(+) + H(+). Its pathway is cofactor biosynthesis; NAD(+) biosynthesis; NAD(+) from deamido-NAD(+) (ammonia route): step 1/1. Functionally, catalyzes the ATP-dependent amidation of deamido-NAD to form NAD. Uses ammonia as a nitrogen source. In Pseudomonas putida (strain GB-1), this protein is NH(3)-dependent NAD(+) synthetase.